We begin with the raw amino-acid sequence, 7081 residues long: Leucine-rich repeat transmembrane protein CCDC168 (7081 aa).

The helical transmembrane segment at 37–57 (WVAIFFIILLGIIFEIILMKA) threads the bilayer. LRR repeat units follow at residues 233 to 256 (PCPL…VRNQ) and 420 to 445 (NAEF…SVKA). Positions 717-745 (EDLQSSENSHLQLSNGEELPTSTPKTQRC) are disordered. Over residues 718–742 (DLQSSENSHLQLSNGEELPTSTPKT) the composition is skewed to polar residues. Residues 865–890 (ADTLRIIRLSHSASKQEKLPDEKETQ) form an LRR 3 repeat. A disordered region spans residues 943 to 1009 (QISSGSSKAP…DPKNPLTMPE (67 aa)). Residues 958–970 (VQPQTLSTQTILE) show a composition bias toward polar residues. Over residues 981–999 (QVEKVKQSTDRPTDRESAG) the composition is skewed to basic and acidic residues. The LRR 4 repeat unit spans residues 1050–1075 (LPAVALGSFNNHLLTLPYFKRQEIKK). Composition is skewed to polar residues over residues 1274–1286 (KCTA…SPIS) and 1295–1304 (LNQTRESYIP). Positions 1274–1304 (KCTADSETPSPISGKSLIGDPLNQTRESYIP) are disordered. One copy of the LRR 5 repeat lies at 1501–1527 (NCLTLELHINGQRLQHQTGFEQTTLET). Basic and acidic residues-rich tracts occupy residues 1773–1784 (ETEKDTLREKRL) and 1793–1804 (TSPHEDSITSRD). 4 disordered regions span residues 1773–1804 (ETEK…TSRD), 1954–1973 (KSPH…ESGS), 2008–2031 (STHQ…EGRS), and 2083–2103 (TGKS…NPRR). Residues 1964–1973 (ANLTDMESGS) show a composition bias toward polar residues. One copy of the LRR 6 repeat lies at 2373–2397 (KNQINTIQLSERKIILNPKCLTMKE). Positions 2637–2680 (GRHSPASEEMKRQNGRLKMADRSSPQGRPLQAKQSAVSQSPDTA) are disordered. Over residues 2668 to 2678 (AKQSAVSQSPD) the composition is skewed to polar residues. LRR repeat units lie at residues 2727-2749 (SKIH…KTRA), 2832-2855 (IQQQ…VYDS), 2862-2889 (IKKL…KLEK), 3433-3458 (LSSR…RLEW), and 3630-3653 (ILSL…NVKS). Residues 3730–3756 (SLSHSNSNSRTKAGKDKSGTLKGCLPP) are disordered. The stretch at 3875 to 3898 (MRGITRFCLSSSTQQELSDTMEKC) is one LRR 12 repeat. Disordered stretches follow at residues 4119-4260 (ELSH…DGDK), 4293-4428 (QGII…KQET), 4729-4756 (QESL…LLPQ), 4794-4817 (SPLS…QDRT), 4831-4859 (MPSL…RLAN), 4928-4955 (GVQE…YLNC), 4966-4985 (LGKT…SDSG), and 5191-5212 (QKVK…SPLH). Composition is skewed to basic and acidic residues over residues 4121 to 4133 (SHQK…EKAD), 4147 to 4176 (KAKD…DKGL), 4192 to 4245 (EPGK…EQQK), 4329 to 4361 (QKAK…DLKG), 4375 to 4401 (EPGK…NRDG), and 4415 to 4426 (EQEKRDGHKSKQ). Over residues 4731-4743 (SLPSRQTAPTKPT) the composition is skewed to polar residues. 2 stretches are compositionally biased toward basic and acidic residues: residues 4746–4756 (LVKKEKQLLPQ) and 4798–4817 (KRKE…QDRT). A compositionally biased stretch (polar residues) spans 5203–5212 (KSPSRSSPLH). The stretch at 5311-5336 (LSQLELDKETHLGNEMLRLKRPILRR) is one LRR 13 repeat. Residues 5467-5496 (LPDTEKTADAEARSGDVRKGKPHRSQKENR) form a disordered region. Residues 5469 to 5496 (DTEKTADAEARSGDVRKGKPHRSQKENR) show a composition bias toward basic and acidic residues. An LRR 14 repeat occupies 5522 to 5545 (LNAKELVLNINKLEKKVHKDKDEA). 2 disordered regions span residues 5564–5583 (LDSG…SSCP) and 5763–5792 (QQET…SNDR). The segment covering 5779–5792 (KFDKPKEDGQSNDR) has biased composition (basic and acidic residues). LRR repeat units follow at residues 5901 to 5924 (KQAL…LFPP), 6259 to 6282 (PDLR…ECPS), 6419 to 6442 (HLES…SLQM), 6552 to 6575 (HFSV…SYAM), and 6613 to 6637 (QIDL…TFPK). Disordered stretches follow at residues 6859–6878 (CKSH…SPDW) and 6916–6950 (APLT…RSDL). Residues 6860–6871 (KSHKSRKYRSSS) show a composition bias toward basic residues. The span at 6937 to 6950 (HPESQERKKARSDL) shows a compositional bias: basic and acidic residues. The LRR 20 repeat unit spans residues 7012-7036 (NRPFFFACVPADSLEVIPKTIRWTI).

Its subcellular location is the membrane. This chain is Leucine-rich repeat transmembrane protein CCDC168, found in Homo sapiens (Human).